Here is a 3305-residue protein sequence, read N- to C-terminus: Microtubule-actin cross-linking factor 1, isoforms 6/7 (3305 aa).

Disordered stretches follow at residues 1-24 (MGKP…GEDE), 108-140 (VQKS…MPPN), 152-202 (LSEV…KSVD), 239-272 (AAAS…GFSE), 333-381 (EEWE…VAVS), 941-1007 (EPAI…PEWS), and 2865-2896 (SVEP…MPIL). The span at 120 to 129 (PNAERKDNVN) shows a compositional bias: basic and acidic residues. EF-hand domains lie at 2958–2993 (HKKS…SKFP) and 2994–3029 (TTKL…NKDA). Ca(2+) contacts are provided by D2971, D2973, D2975, K2977, E2982, D3007, D3009, D3011, Y3013, and E3018. Residues 3034–3106 (TDADKIEDEV…EFLVKNDPCR (73 aa)) form the GAR domain. The disordered stretch occupies residues 3122-3305 (PEGASQGMTP…ASPRTPGPKR (184 aa)). Residues 3142-3176 (SSRAASPTRSSSSASQSNHSCTSMPSSPATPASGT) show a composition bias toward low complexity. The span at 3193-3212 (FHSSRTSLAGDTSNSSSPAS) shows a compositional bias: polar residues. The segment covering 3227 to 3241 (SRPGSRAGSRAGSRA) has biased composition (low complexity). Residues 3256–3266 (ETQSACSDTSE) show a composition bias toward polar residues. The span at 3267–3278 (SSAAGGQGSSRR) shows a compositional bias: low complexity.

It localises to the cytoplasm. The protein localises to the cytoskeleton. The polypeptide is Microtubule-actin cross-linking factor 1, isoforms 6/7 (Mus musculus (Mouse)).